The sequence spans 350 residues: Protein-glutamate methylesterase/protein-glutamine glutaminase (350 aa).

Positions 5 to 122 constitute a Response regulatory domain; sequence KVLCVDDSAL…RDGLIEYSEV (118 aa). The residue at position 56 (Asp56) is a 4-aspartylphosphate. Positions 152-346 constitute a CheB-type methylesterase domain; the sequence is PFASSEKLVI…ERILTRLGDR (195 aa). Catalysis depends on residues Ser165, His191, and Asp288.

The protein belongs to the CheB family. Post-translationally, phosphorylated by CheA. Phosphorylation of the N-terminal regulatory domain activates the methylesterase activity.

The protein resides in the cytoplasm. The catalysed reaction is [protein]-L-glutamate 5-O-methyl ester + H2O = L-glutamyl-[protein] + methanol + H(+). It catalyses the reaction L-glutaminyl-[protein] + H2O = L-glutamyl-[protein] + NH4(+). In terms of biological role, involved in chemotaxis. Part of a chemotaxis signal transduction system that modulates chemotaxis in response to various stimuli. Catalyzes the demethylation of specific methylglutamate residues introduced into the chemoreceptors (methyl-accepting chemotaxis proteins or MCP) by CheR. Also mediates the irreversible deamidation of specific glutamine residues to glutamic acid. This is Protein-glutamate methylesterase/protein-glutamine glutaminase from Bordetella bronchiseptica (strain ATCC BAA-588 / NCTC 13252 / RB50) (Alcaligenes bronchisepticus).